The sequence spans 290 residues: 2-dehydropantoate 2-reductase (290 aa).

NADP(+)-binding positions include 8–13, N98, and A124; that span reads GPGAVG. A substrate-binding site is contributed by N98. The active-site Proton donor is K175. N179 and S244 together coordinate substrate. Residue E256 coordinates NADP(+).

The protein belongs to the ketopantoate reductase family.

It is found in the cytoplasm. The enzyme catalyses (R)-pantoate + NADP(+) = 2-dehydropantoate + NADPH + H(+). It functions in the pathway cofactor biosynthesis; (R)-pantothenate biosynthesis; (R)-pantoate from 3-methyl-2-oxobutanoate: step 2/2. In terms of biological role, catalyzes the NADPH-dependent reduction of ketopantoate into pantoic acid. This chain is 2-dehydropantoate 2-reductase, found in Caulobacter vibrioides (strain ATCC 19089 / CIP 103742 / CB 15) (Caulobacter crescentus).